We begin with the raw amino-acid sequence, 544 residues long: Serine/threonine-protein kinase PAK 1 (544 aa).

Positions 1–79 (MSNNGLDVQD…KERPEISLPS (79 aa)) are disordered. Ser2 carries the post-translational modification N-acetylserine. At Ser21 the chain carries Phosphoserine; by PKB and autocatalysis. A Phosphoserine; by autocatalysis modification is found at Ser57. Residues 68–79 (KEKERPEISLPS) are compositionally biased toward basic and acidic residues. The tract at residues 70–140 (KERPEISLPS…YNSKKTSNSQ (71 aa)) is autoregulatory region. The 14-residue stretch at 75 to 88 (ISLPSDFEHTIHVG) folds into the CRIB domain. A GTPase-binding region spans residues 75-105 (ISLPSDFEHTIHVGFDAVTGEFTGMPEQWAR). The residue at position 84 (Thr84) is a Phosphothreonine; by OXSR1. Ser115 bears the Phosphoserine mark. 2 positions are modified to phosphotyrosine: Tyr131 and Tyr142. Ser144 and Ser149 each carry phosphoserine; by autocatalysis. Over residues 150-166 (AEDYNSSNTLNVKTVSE) the composition is skewed to polar residues. The tract at residues 150-195 (AEDYNSSNTLNVKTVSETPAVPPVSEDEDDDDDATPPPVIAPRPEH) is disordered. Phosphotyrosine; by JAK2 is present on Tyr153. Position 174 is a phosphoserine (Ser174). Residues 174–183 (SEDEDDDDDA) are compositionally biased toward acidic residues. A Phosphothreonine modification is found at Thr184. Phosphoserine; by autocatalysis is present on Ser198. A Phosphotyrosine; by JAK2 modification is found at Tyr200. The residue at position 203 (Ser203) is a Phosphoserine; by autocatalysis. The segment at 209–250 (PVTPTRDVATSPISPTENNTTPPDALTRNTEKQKKKPKMSDE) is disordered. Phosphothreonine is present on residues Thr211 and Thr218. Phosphoserine occurs at positions 219 and 222. Over residues 219-230 (SPISPTENNTTP) the composition is skewed to polar residues. Residues Thr224, Thr228, and Thr229 each carry the phosphothreonine modification. The region spanning 269–520 (YTRFEKIGQG…AKELLQHQFL (252 aa)) is the Protein kinase domain. ATP is bound at residue 275–283 (IGQGASGTV). Tyr284 is modified (phosphotyrosine; by JAK2). Lys298 is a binding site for ATP. Asp388 functions as the Proton acceptor in the catalytic mechanism. Thr422 carries the phosphothreonine; by autocatalysis, BRSK2 and PDPK1 modification.

This sequence belongs to the protein kinase superfamily. STE Ser/Thr protein kinase family. STE20 subfamily. As to quaternary structure, homodimer in its autoinhibited state. Active as monomer. Interacts with GIT1. Component of cytoplasmic complexes, which also contains PXN, ARHGEF7 and GIT1. Interacts with NISCH. Interacts with DVL1; mediates the formation of a DVL1, MUSK and PAK1 ternary complex involved in AChR clustering. Binds to the caspase-cleaved p110 isoform of CDC2L1 and CDC2L2, p110C, but not the full-length proteins. Interacts with ARHGEF7. Interacts with SCRIB. Interacts with PDPK1. Interacts (via kinase domain) with RAF1. Interacts with NCK1 and NCK2. Interacts with TBCB. Interacts with BRSK2. Interacts tightly with GTP-bound but not GDP-bound CDC42/P21 and RAC1. Interacts with SNAI1. Interacts with CIB1 (via N-terminal region); the interaction is direct, promotes PAK1 activity and occurs in a calcium-dependent manner. Interacts with INPP5K. Interacts with gamma-tubulin. Interacts with RHOU; the interaction promotes PAK1 activation. Requires Mg(2+) as cofactor. Post-translationally, autophosphorylated in trans, meaning that in a dimer, one kinase molecule phosphorylates the other one. Activated by autophosphorylation at Thr-422 in response to a conformation change, triggered by interaction with GTP-bound CDC42 or RAC1. Activated by phosphorylation at Thr-422 by PDPK1. Phosphorylated by JAK2 in response to PRL; this increases PAK1 kinase activity. Phosphorylated at Ser-21 by PKB/AKT; this reduces interaction with NCK1 and association with focal adhesion sites. Activated by phosphorylation at Thr-422 by BRSK2. Upon DNA damage, phosphorylated at Thr-211 and translocates to the nucleoplasm. Phosphorylated at tyrosine residues, which can be enhanced by NTN1. As to expression, expressed predominantly in the brain, with higher expression in neuronal groups associated with motor function, and at lower levels in the spleen.

It localises to the cytoplasm. The protein resides in the cell junction. Its subcellular location is the focal adhesion. The protein localises to the cell projection. It is found in the lamellipodium. It localises to the cell membrane. The protein resides in the ruffle membrane. Its subcellular location is the invadopodium. The protein localises to the nucleus. It is found in the nucleoplasm. It localises to the chromosome. The protein resides in the cytoskeleton. Its subcellular location is the microtubule organizing center. The protein localises to the centrosome. It catalyses the reaction L-seryl-[protein] + ATP = O-phospho-L-seryl-[protein] + ADP + H(+). It carries out the reaction L-threonyl-[protein] + ATP = O-phospho-L-threonyl-[protein] + ADP + H(+). Its activity is regulated as follows. Phosphorylation of Thr-84 by OXSR1 inhibits activation. Activated by binding small G proteins. Binding of GTP-bound CDC42 or RAC1 to the autoregulatory region releases monomers from the autoinhibited dimer, and enables activation by phosphorylation of Thr-422. Its function is as follows. Protein kinase involved in intracellular signaling pathways downstream of integrins and receptor-type kinases that plays an important role in cytoskeleton dynamics, in cell adhesion, migration, proliferation, apoptosis, mitosis, and in vesicle-mediated transport processes. Can directly phosphorylate BAD and protects cells against apoptosis. Activated by interaction with CDC42 and RAC1. Functions as a GTPase effector that links the Rho-related GTPases CDC42 and RAC1 to the JNK MAP kinase pathway. Phosphorylates and activates MAP2K1, and thereby mediates activation of downstream MAP kinases. Involved in the reorganization of the actin cytoskeleton, actin stress fibers and of focal adhesion complexes. Phosphorylates the tubulin chaperone TBCB and thereby plays a role in the regulation of microtubule biogenesis and organization of the tubulin cytoskeleton. Plays a role in the regulation of insulin secretion in response to elevated glucose levels. Part of a ternary complex that contains PAK1, DVL1 and MUSK that is important for MUSK-dependent regulation of AChR clustering during the formation of the neuromuscular junction (NMJ). Activity is inhibited in cells undergoing apoptosis, potentially due to binding of CDC2L1 and CDC2L2. Phosphorylates MYL9/MLC2. Phosphorylates RAF1 at 'Ser-338' and 'Ser-339' resulting in: activation of RAF1, stimulation of RAF1 translocation to mitochondria, phosphorylation of BAD by RAF1, and RAF1 binding to BCL2. Phosphorylates SNAI1 at 'Ser-246' promoting its transcriptional repressor activity by increasing its accumulation in the nucleus. In podocytes, promotes NR3C2 nuclear localization. Required for atypical chemokine receptor ACKR2-induced phosphorylation of LIMK1 and cofilin (CFL1) and for the up-regulation of ACKR2 from endosomal compartment to cell membrane, increasing its efficiency in chemokine uptake and degradation. In synapses, seems to mediate the regulation of F-actin cluster formation performed by SHANK3, maybe through CFL1 phosphorylation and inactivation. Plays a role in RUFY3-mediated facilitating gastric cancer cells migration and invasion. In response to DNA damage, phosphorylates MORC2 which activates its ATPase activity and facilitates chromatin remodeling. In neurons, plays a crucial role in regulating GABA(A) receptor synaptic stability and hence GABAergic inhibitory synaptic transmission through its role in F-actin stabilization. In hippocampal neurons, necessary for the formation of dendritic spines and excitatory synapses; this function is dependent on kinase activity and may be exerted by the regulation of actomyosin contractility through the phosphorylation of myosin II regulatory light chain (MLC). Along with GIT1, positively regulates microtubule nucleation during interphase. Phosphorylates FXR1, promoting its localization to stress granules and activity. Phosphorylates ILK on 'Thr-173' and 'Ser-246', promoting nuclear export of ILK. The polypeptide is Serine/threonine-protein kinase PAK 1 (Rattus norvegicus (Rat)).